The chain runs to 287 residues: NADH-cytochrome b5 reductase 1 (287 aa).

A helical transmembrane segment spans residues 5–25; it reads FEALVTALVLAVSFIFIYGKF. In terms of domain architecture, FAD-binding FR-type spans 41 to 145; that stretch reads KDWQEFSLLT…RGPKGFYHYE (105 aa). FAD-binding positions include 125–142 and 151–183; these read AELAIGDRIKVRGPKGFY and EIGMIAGGTGISPMYQIIRAIFSNPRDKTRVCL.

The protein belongs to the flavoprotein pyridine nucleotide cytochrome reductase family. As to quaternary structure, monomer. Component of the 2-(3-amino-3-carboxypropyl)histidine synthase complex composed of DPH1, DPH2, DPH3 and a NADH-dependent reductase, predominantly CBR1. FAD serves as cofactor.

The protein localises to the mitochondrion outer membrane. It carries out the reaction 2 Fe(III)-[cytochrome b5] + NADH = 2 Fe(II)-[cytochrome b5] + NAD(+) + H(+). The enzyme catalyses 2 Fe(3+)-[Dph3] + NADH = 2 Fe(2+)-[Dph3] + NAD(+) + H(+). It participates in protein modification; peptidyl-diphthamide biosynthesis. In terms of biological role, NADH-dependent reductase for DPH3 and cytochrome b5. Required for the first step of diphthamide biosynthesis, a post-translational modification of histidine which occurs in elongation factor 2. DPH1 and DPH2 transfer a 3-amino-3-carboxypropyl (ACP) group from S-adenosyl-L-methionine (SAM) to a histidine residue, the reaction is assisted by a reduction system comprising DPH3 and a NADH-dependent reductase, predominantly CBR1. By reducing DPH3, also involved in the formation of the tRNA wobble base modification mcm5s 2U (5-methoxycarbonylmethyl-2-thiouridine), mediated by the elongator complex. The cytochrome b5/NADH cytochrome b5 reductase electron transfer system supports the catalytic activity of several sterol biosynthetic enzymes. The sequence is that of NADH-cytochrome b5 reductase 1 (CBR1) from Eremothecium gossypii (strain ATCC 10895 / CBS 109.51 / FGSC 9923 / NRRL Y-1056) (Yeast).